The primary structure comprises 757 residues: MLSSVCVSSFRGRQGASKQQPAPPPQPPESPPPPPLPPQQQQPAQPGPAASPAGPPAPRGPGDRRAEPCPGLPAAAMGRHGGGGGDSGKIVINVGGVRHETYRSTLRTLPGTRLAGLTEPEAAARFDYDPGADEFFFDRHPGVFAYVLNYYRTGKLHCPADVCGPLFEEELGFWGIDETDVEACCWMTYRQHRDAEEALDSFEAPDPAGAANAANAAGAHDGGLDDEAGAGGGGLDGAGGELKRLCFQDAGGGAGGPPGGAGGAGGTWWRRWQPRVWALFEDPYSSRAARYVAFASLFFILISITTFCLETHEGFIHISNKTVTQASPIPGAPPENITNVEVETEPFLTYVEGVCVVWFTFEFLMRITFCPDKVEFLKSSLNIIDCVAILPFYLEVGLSGLSSKAAKDVLGFLRVVRFVRILRIFKLTRHFVGLRVLGHTLRASTNEFLLLIIFLALGVLIFATMIYYAERIGADPDDILGSNHTYFKNIPIGFWWAVVTMTTLGYGDMYPKTWSGMLVGALCALAGVLTIAMPVPVIVNNFGMYYSLAMAKQKLPKKKNKHIPRPPQPGSPNYCKPDPPPPPPPHPHHGSGGISPPPPITPPSMGVTVAGAYPAGPHTHPGLLRGGAGGLGIMGLPPLPAPGEPCPLAQEEVIEINRADPRPNGDPAAAALAHEDCPAIDQPAMSPEDKSPITPGSRGRYSRDRACFLLTDYAPSPDGSIRKATGAPPLPPQDWRKPGPPSFLPDLNANAAAWISP.

Positions 1 to 78 (MLSSVCVSSF…CPGLPAAAMG (78 aa)) are important for normal N-type inactivation. The tract at residues 1–87 (MLSSVCVSSF…GRHGGGGGDS (87 aa)) is disordered. Residues 1-290 (MLSSVCVSSF…EDPYSSRAAR (290 aa)) lie on the Cytoplasmic side of the membrane. The span at 21 to 40 (PAPPPQPPESPPPPPLPPQQ) shows a compositional bias: pro residues. Low complexity predominate over residues 41-52 (QQPAQPGPAASP). Zn(2+) contacts are provided by histidine 157, cysteine 163, cysteine 184, and cysteine 185. A compositionally biased stretch (low complexity) spans 210–219 (AANAANAAGA). Residues 210–232 (AANAANAAGAHDGGLDDEAGAGG) form a disordered region. Residues 291-309 (YVAFASLFFILISITTFCL) form a helical membrane-spanning segment. 2 N-linked (GlcNAc...) asparagine glycosylation sites follow: asparagine 320 and asparagine 336. Residues 351–370 (VEGVCVVWFTFEFLMRITFC) form a helical membrane-spanning segment. Residues 371–379 (PDKVEFLKS) lie on the Cytoplasmic side of the membrane. A helical transmembrane segment spans residues 380-398 (SLNIIDCVAILPFYLEVGL). Residues 412–434 (FLRVVRFVRILRIFKLTRHFVGL) form a helical; Voltage-sensor membrane-spanning segment. Topologically, residues 435 to 447 (RVLGHTLRASTNE) are cytoplasmic. Residues 448–469 (FLLLIIFLALGVLIFATMIYYA) traverse the membrane as a helical segment. Asparagine 483 is a glycosylation site (N-linked (GlcNAc...) asparagine). Positions 503, 504, 505, and 506 each coordinate K(+). The Selectivity filter motif lies at 503 to 508 (TLGYGD). Residues 518 to 539 (LVGALCALAGVLTIAMPVPVIV) traverse the membrane as a helical segment. Topologically, residues 540 to 757 (NNFGMYYSLA…NANAAAWISP (218 aa)) are cytoplasmic. Residues 556–613 (PKKKNKHIPRPPQPGSPNYCKPDPPPPPPPHPHHGSGGISPPPPITPPSMGVTVAGAY) form a disordered region. Arginine 625 is subject to Omega-N-methylarginine. A disordered region spans residues 682–746 (QPAMSPEDKS…KPGPPSFLPD (65 aa)). Serine 686 and serine 691 each carry phosphoserine. Pro residues predominate over residues 728-743 (PPLPPQDWRKPGPPSF).

Belongs to the potassium channel family. C (Shaw) (TC 1.A.1.2) subfamily. Kv3.3/KCNC3 sub-subfamily. In terms of assembly, homotetramer. Heterotetramer with KCNC1. Interacts (via C-terminus) with HAX1; this interaction modulates channel gating. Identified in a complex with ACTR3, a subunit of the Arp2/3 complex; this interaction is indirect and depends on the presence of HAX1. N-glycosylated.

It localises to the cell membrane. Its subcellular location is the presynaptic cell membrane. The protein localises to the perikaryon. It is found in the cell projection. The protein resides in the axon. It localises to the dendrite. Its subcellular location is the dendritic spine membrane. The protein localises to the cytoplasm. It is found in the cell cortex. The protein resides in the cytoskeleton. It carries out the reaction K(+)(in) = K(+)(out). Its function is as follows. Voltage-gated potassium channel that plays an important role in the rapid repolarization of fast-firing brain neurons. The channel opens in response to the voltage difference across the membrane, forming a potassium-selective channel through which potassium ions pass in accordance with their electrochemical gradient. The channel displays rapid activation and inactivation kinetics. It plays a role in the regulation of the frequency, shape and duration of action potentials in Purkinje cells. Required for normal survival of cerebellar neurons, probably via its role in regulating the duration and frequency of action potentials that in turn regulate the activity of voltage-gated Ca(2+) channels and cellular Ca(2+) homeostasis. Required for normal motor function. Plays a role in the reorganization of the cortical actin cytoskeleton and the formation of actin veil structures in neuronal growth cones via its interaction with HAX1 and the Arp2/3 complex. This is Voltage-gated potassium channel KCNC3 (KCNC3) from Homo sapiens (Human).